A 275-amino-acid polypeptide reads, in one-letter code: Enoyl-[acyl-carrier-protein] reductase [NADH] FabI (275 aa).

NAD(+) contacts are provided by residues glycine 13, 19-20 (SI), 64-65 (DV), and valine 92. Alanine 95 is a binding site for substrate. Residues tyrosine 145 and tyrosine 155 each act as proton acceptor in the active site. Residues lysine 162 and 191–195 (IRTLA) each bind NAD(+).

The protein belongs to the short-chain dehydrogenases/reductases (SDR) family. FabI subfamily. Homotetramer.

It carries out the reaction a 2,3-saturated acyl-[ACP] + NAD(+) = a (2E)-enoyl-[ACP] + NADH + H(+). The protein operates within lipid metabolism; fatty acid biosynthesis. In terms of biological role, catalyzes the reduction of a carbon-carbon double bond in an enoyl moiety that is covalently linked to an acyl carrier protein (ACP). Involved in the elongation cycle of fatty acid which are used in the lipid metabolism. This is Enoyl-[acyl-carrier-protein] reductase [NADH] FabI (fabI) from Helicobacter pylori (strain ATCC 700392 / 26695) (Campylobacter pylori).